Consider the following 434-residue polypeptide: Serine--tRNA ligase (434 aa).

239–241 is a binding site for L-serine; the sequence is TAE. 270 to 272 contacts ATP; it reads RSE. Glutamate 293 contacts L-serine. 357-360 is an ATP binding site; it reads EISS. Serine 393 serves as a coordination point for L-serine.

This sequence belongs to the class-II aminoacyl-tRNA synthetase family. Type-1 seryl-tRNA synthetase subfamily. Homodimer. The tRNA molecule binds across the dimer.

The protein localises to the cytoplasm. The enzyme catalyses tRNA(Ser) + L-serine + ATP = L-seryl-tRNA(Ser) + AMP + diphosphate + H(+). It carries out the reaction tRNA(Sec) + L-serine + ATP = L-seryl-tRNA(Sec) + AMP + diphosphate + H(+). It functions in the pathway aminoacyl-tRNA biosynthesis; selenocysteinyl-tRNA(Sec) biosynthesis; L-seryl-tRNA(Sec) from L-serine and tRNA(Sec): step 1/1. Its function is as follows. Catalyzes the attachment of serine to tRNA(Ser). Is also able to aminoacylate tRNA(Sec) with serine, to form the misacylated tRNA L-seryl-tRNA(Sec), which will be further converted into selenocysteinyl-tRNA(Sec). The sequence is that of Serine--tRNA ligase from Mesorhizobium japonicum (strain LMG 29417 / CECT 9101 / MAFF 303099) (Mesorhizobium loti (strain MAFF 303099)).